Reading from the N-terminus, the 529-residue chain is CRISPR-associated endodeoxyribonuclease Cas12f1 (529 aa).

A zinc finger domain (ZF) region spans residues 1-95 (MAKNTITKTL…RGQFPDAVFW (95 aa)). Zn(2+) is bound by residues C50, H53, C69, and C72. The interval 96–192 (QEISEIFRQL…PTTKSDNFPI (97 aa)) is recognition domain (REC). The segment at 193–312 (PLVKQKGGQY…MLNLSIDVPK (120 aa)) is wedge domain (WED). A linker region spans residues 313-321 (IDKGVDPSI). The interval 322–473 (IGGIDVGVKS…RKVAPNNTSK (152 aa)) is ruvC-I. Catalysis depends on residues D326 and E422. Residues 474–508 (TCSKCGHLNNYFNFEYRKKNKFPHFKCEKCNFKEN) are target nucleic acid-binding (TNB). Residues C475 and C478 each contribute to the Zn(2+) site. R490 is an active-site residue. Residues C500 and C503 each coordinate Zn(2+). The tract at residues 509 to 529 (ADYNAALNISNPKLKSTKEEP) is ruvC-II. D510 is an active-site residue.

Belongs to the CRISPR-associated endonuclease Cas12f family. As to quaternary structure, an asymmetric homodimer. Guide RNA is probably required for dimerization. The cofactor is Mg(2+). Requires Zn(2+) as cofactor.

Its activity is regulated as follows. Target ssDNA cleavage is inhibited by EDTA. Activity is maximal with 5-50 mM NaCl, is less efficient at higher NaCl concentrations. In terms of biological role, CRISPR (clustered regularly interspaced short palindromic repeat), is an adaptive immune system that provides protection against mobile genetic elements (viruses, transposable elements and conjugative plasmids). CRISPR clusters contain sequences complementary to antecedent mobile elements and target invading nucleic acids. CRISPR clusters are transcribed and processed into CRISPR RNA (crRNA), which requires a trans-encoded small RNA (tracrRNA), but not this protein (in vitro). Upon expression in E.coli of this protein, a mini CRISPR array and the probable tracrRNA, the protein associates with both RNAs. The mini system is not active in E.coli against phiX174 phage, nor is it active in protection against transformation by foreign plasmids. In vitro the purified protein-tracrRNA-crRNA complex cleaves ssDNA complementary to the crRNA; target cleavage requires both tracrRNA and crRNA, but not a protospacer adjacent motif (PAM). The tracrRNA-crRNA can be replaced by a single guide RNA (sgRNA). 2-nucleotide mismatches in the middle of the crRNA:DNA heteroduplex decrease cleavage. Cleavage occurs just downstream of the heteroduplex. Activation of this protein results in non-specific ssDNA degradation in vitro. In vitro and in E.coli (coexpressed with sgRNA) has dsDNA endonuclease activity, recognizing the 5' PAM sequence TTTR; both sgRNA and a PAM are required for activity. Cleaves the target strand 24 and the nontarget strand 22 bases upstream of the PAM (respectively), resulting in 5' overhangs. The 2 monomers interact differently with the sgRNA and target DNA. Mutagenesis of a dimeric construct shows that one of the RuvC monomers probably cleaves both DNA strands. The sequence is that of CRISPR-associated endodeoxyribonuclease Cas12f1 from Uncultured archaeon.